The sequence spans 251 residues: Triosephosphate isomerase (251 aa).

N9–K11 lines the substrate pocket. Catalysis depends on H95, which acts as the Electrophile. Residue E167 is the Proton acceptor of the active site. Substrate contacts are provided by residues G173, S212, and G233–G234.

Belongs to the triosephosphate isomerase family. As to quaternary structure, homodimer.

It localises to the cytoplasm. It carries out the reaction D-glyceraldehyde 3-phosphate = dihydroxyacetone phosphate. It functions in the pathway carbohydrate biosynthesis; gluconeogenesis. Its pathway is carbohydrate degradation; glycolysis; D-glyceraldehyde 3-phosphate from glycerone phosphate: step 1/1. Involved in the gluconeogenesis. Catalyzes stereospecifically the conversion of dihydroxyacetone phosphate (DHAP) to D-glyceraldehyde-3-phosphate (G3P). The protein is Triosephosphate isomerase of Vibrio sp. (strain ANT-300).